The primary structure comprises 677 residues: Zinc finger CCCH domain-containing protein 23 (677 aa).

The tract at residues Pro66–Gly117 is disordered. Residues Ala69–Pro82 show a composition bias toward low complexity. Over residues Pro98–Met113 the composition is skewed to polar residues. Residues Gly228–Leu255 form a C3H1-type zinc finger. One can recognise an RRM domain in the interval Arg359–Lys435. The stretch at Ala480–Gln513 forms a coiled coil. Over residues Thr535–Leu562 the composition is skewed to polar residues. The interval Thr535–Ala607 is disordered. Residues Arg589–Leu601 show a composition bias toward basic and acidic residues.

The polypeptide is Zinc finger CCCH domain-containing protein 23 (Oryza sativa subsp. japonica (Rice)).